A 187-amino-acid polypeptide reads, in one-letter code: Peptidyl-tRNA hydrolase (187 aa).

Tyr15 provides a ligand contact to tRNA. His20 acts as the Proton acceptor in catalysis. Positions 64, 66, and 112 each coordinate tRNA.

Belongs to the PTH family. As to quaternary structure, monomer.

The protein localises to the cytoplasm. The enzyme catalyses an N-acyl-L-alpha-aminoacyl-tRNA + H2O = an N-acyl-L-amino acid + a tRNA + H(+). Hydrolyzes ribosome-free peptidyl-tRNAs (with 1 or more amino acids incorporated), which drop off the ribosome during protein synthesis, or as a result of ribosome stalling. In terms of biological role, catalyzes the release of premature peptidyl moieties from peptidyl-tRNA molecules trapped in stalled 50S ribosomal subunits, and thus maintains levels of free tRNAs and 50S ribosomes. In Bacteroides fragilis (strain ATCC 25285 / DSM 2151 / CCUG 4856 / JCM 11019 / LMG 10263 / NCTC 9343 / Onslow / VPI 2553 / EN-2), this protein is Peptidyl-tRNA hydrolase.